The primary structure comprises 109 residues: Nucleoid-associated protein Shal_1591 (109 aa).

Positions 87–109 (NQKEKMAEVTGGMQLPPGMKMPF) are disordered.

The protein belongs to the YbaB/EbfC family. As to quaternary structure, homodimer.

The protein resides in the cytoplasm. It localises to the nucleoid. Binds to DNA and alters its conformation. May be involved in regulation of gene expression, nucleoid organization and DNA protection. The chain is Nucleoid-associated protein Shal_1591 from Shewanella halifaxensis (strain HAW-EB4).